The chain runs to 157 residues: MNYEIKQEEKRTVAGFHLVGPWEQTVKKGFEQLMMWVDSKNIVPKEWVAVYYDNPDETPAEKLRCDTVVTVPGYFTLPENSEGVILTEITGGQYAVAVARVVGDDFAKPWYQFFNSLLQDSAYEMLPKPCFEVYLNNGAEDGYWDIEMYVAVQPKHH.

The protein belongs to the DNA gyrase inhibitor family. As to quaternary structure, interacts with DNA gyrase.

It is found in the cytoplasm. Its function is as follows. Inhibits the supercoiling activity of DNA gyrase. Acts by inhibiting DNA gyrase at an early step, prior to (or at the step of) binding of DNA by the gyrase. It protects cells against toxins that target DNA gyrase, by inhibiting activity of these toxins and reducing the formation of lethal double-strand breaks in the cell. The sequence is that of DNA gyrase inhibitor from Shigella boydii serotype 18 (strain CDC 3083-94 / BS512).